Consider the following 74-residue polypeptide: Cell division protein ZapB (74 aa).

The stretch at 2–74 forms a coiled coil; the sequence is TLDLLEQLES…LVGKIEETES (73 aa).

The protein belongs to the ZapB family. Homodimer. The ends of the coiled-coil dimer bind to each other, forming polymers. Interacts with FtsZ.

The protein resides in the cytoplasm. Non-essential, abundant cell division factor that is required for proper Z-ring formation. It is recruited early to the divisome by direct interaction with FtsZ, stimulating Z-ring assembly and thereby promoting cell division earlier in the cell cycle. Its recruitment to the Z-ring requires functional FtsA or ZipA. This chain is Cell division protein ZapB, found in Psychromonas ingrahamii (strain DSM 17664 / CCUG 51855 / 37).